Here is a 565-residue protein sequence, read N- to C-terminus: Periplasmic trehalase (565 aa).

The N-terminal stretch at 1–30 (MKSPAPSRPQKMALIPACIFLCFAALSVQA) is a signal peptide. Substrate contacts are provided by residues arginine 152, 159-160 (WD), asparagine 196, 205-207 (RSQ), 277-279 (RPE), and glycine 310. Active-site proton donor/acceptor residues include aspartate 312 and glutamate 496. Glutamate 511 is a binding site for substrate. The tract at residues 539-565 (CDNVPATRPLSESTTQPLKQKEAEPTP) is disordered.

Belongs to the glycosyl hydrolase 37 family. In terms of assembly, monomer.

It localises to the periplasm. The catalysed reaction is alpha,alpha-trehalose + H2O = alpha-D-glucose + beta-D-glucose. In terms of biological role, provides the cells with the ability to utilize trehalose at high osmolarity by splitting it into glucose molecules that can subsequently be taken up by the phosphotransferase-mediated uptake system. This Escherichia coli O1:K1 / APEC protein is Periplasmic trehalase.